A 156-amino-acid polypeptide reads, in one-letter code: Mediator of RNA polymerase II transcription subunit 28 (156 aa).

The tract at residues Met1–Ile38 is disordered. Positions Pro104–Val156 form a coiled coil.

The protein belongs to the Mediator complex subunit 28 family. As to quaternary structure, dimers. Component of the Mediator complex. Interacts with GEBPL.

It localises to the nucleus. In terms of biological role, component of the Mediator complex, a coactivator involved in the regulated transcription of nearly all RNA polymerase II-dependent genes. Mediator functions as a bridge to convey information from gene-specific regulatory proteins to the basal RNA polymerase II transcription machinery. The Mediator complex, having a compact conformation in its free form, is recruited to promoters by direct interactions with regulatory proteins and serves for the assembly of a functional pre-initiation complex with RNA polymerase II and the general transcription factors. This Arabidopsis thaliana (Mouse-ear cress) protein is Mediator of RNA polymerase II transcription subunit 28.